The chain runs to 158 residues: Dihydroneopterin triphosphate diphosphatase (158 aa).

Residues Lys14, Arg36, and Thr47 each contribute to the substrate site. Positions 14–153 (KNNQSVLVVI…NNAEAIKKYL (140 aa)) constitute a Nudix hydrolase domain. The Nudix box signature appears at 48-69 (GTIESDETPKKTAIRELWEEVR). Mg(2+)-binding residues include Glu63 and Glu67. 88 to 91 (FEIF) lines the substrate pocket. Position 124 (Glu124) interacts with Mg(2+). Residue Ser142 coordinates substrate.

Belongs to the Nudix hydrolase family. Mg(2+) is required as a cofactor.

The enzyme catalyses 7,8-dihydroneopterin 3'-triphosphate + H2O = 7,8-dihydroneopterin 3'-phosphate + diphosphate + H(+). In terms of biological role, catalyzes the hydrolysis of dihydroneopterin triphosphate to dihydroneopterin monophosphate and pyrophosphate. Required for efficient folate biosynthesis. Can also hydrolyze nucleoside triphosphates with a preference for dATP. This Haemophilus influenzae (strain ATCC 51907 / DSM 11121 / KW20 / Rd) protein is Dihydroneopterin triphosphate diphosphatase (nudB).